Here is a 318-residue protein sequence, read N- to C-terminus: Malate dehydrogenase (318 aa).

NAD(+) contacts are provided by residues 11 to 17 (GAGGNVG) and D37. The substrate site is built by R86 and R92. Residues N99 and 122–124 (VTN) contribute to the NAD(+) site. Substrate contacts are provided by N124 and R155. Residue H179 is the Proton acceptor of the active site.

Belongs to the LDH/MDH superfamily. MDH type 3 family.

It carries out the reaction (S)-malate + NAD(+) = oxaloacetate + NADH + H(+). Its function is as follows. Catalyzes the reversible oxidation of malate to oxaloacetate. The sequence is that of Malate dehydrogenase from Nitratiruptor sp. (strain SB155-2).